A 216-amino-acid chain; its full sequence is Heart- and neural crest derivatives-expressed protein 1 (216 aa).

Disordered regions lie at residues Met1–His20, Ala53–Ser109, and Glu165–Thr203. Basic residues predominate over residues Ala8–Pro18. Residues Thr65–Pro78 are compositionally biased toward low complexity. The segment covering Leu92–Arg104 has biased composition (basic residues). One can recognise a bHLH domain in the interval Lys94 to Leu146. A Phosphothreonine; by PLK4 modification is found at Thr107. Ser109 is subject to Phosphoserine; by PLK4. Positions Glu165–Glu174 are enriched in basic and acidic residues.

As to quaternary structure, efficient DNA binding requires dimerization with another bHLH protein. Forms homodimers and heterodimers with TCF3 gene products E12 and E47, HAND2 and HEY1, HEY2 and HEYL (hairy-related transcription factors). Interacts with MDFIC. Interacts with SOX15; the interaction enhances HAND1-induced differentiation of trophoblast giant cells. In terms of processing, phosphorylation by PLK4 disrupts the interaction with MDFIC and leads to translocation into the nucleoplasm, allowing dimerization and transcription factor activity. In terms of tissue distribution, smooth muscle cells of the gut and adrenal tissue.

The protein resides in the nucleus. It is found in the nucleoplasm. It localises to the nucleolus. Its function is as follows. Transcription factor that plays an essential role in both trophoblast giant cell differentiation and in cardiac morphogenesis. Binds the DNA sequence 5'-NRTCTG-3' (non-canonical E-box). Acts as a transcriptional repressor of SOX15. In the adult, could be required for ongoing expression of cardiac-specific genes. The protein is Heart- and neural crest derivatives-expressed protein 1 (Hand1) of Mus musculus (Mouse).